We begin with the raw amino-acid sequence, 261 residues long: MSDSISVIKEKLSEVTSENDPFFQKCIQDERKGVEKLVQSVRRKWEKEAKLLVKLKEMTQYETDLFQQGYKYIAGVDEVGRGPLAGPVVAAAVILPADFSVVGINDSKQLSEAKRDALFEKIKKEAIAIGVGIIEHDVIDQVNIYEATKLAMCEALNQLTPEPDFVLIDAMPLRYTEAELSLIKGDTKSISIAAASIIAKVTRDRLMQMYDEKYPGYDFANNMGYGTKKHLLGLDTIGICPIHRMSFSPVKESKLHFDSLN.

In terms of domain architecture, RNase H type-2 spans 71 to 259; that stretch reads KYIAGVDEVG…VKESKLHFDS (189 aa). A divalent metal cation contacts are provided by aspartate 77, glutamate 78, and aspartate 169.

It belongs to the RNase HII family. Requires Mn(2+) as cofactor. The cofactor is Mg(2+).

It localises to the cytoplasm. The catalysed reaction is Endonucleolytic cleavage to 5'-phosphomonoester.. Functionally, endonuclease that specifically degrades the RNA of RNA-DNA hybrids. The polypeptide is Ribonuclease HII (Listeria monocytogenes serovar 1/2a (strain ATCC BAA-679 / EGD-e)).